The chain runs to 466 residues: Asparagine--tRNA ligase (466 aa).

Belongs to the class-II aminoacyl-tRNA synthetase family. In terms of assembly, homodimer.

It localises to the cytoplasm. It catalyses the reaction tRNA(Asn) + L-asparagine + ATP = L-asparaginyl-tRNA(Asn) + AMP + diphosphate + H(+). This chain is Asparagine--tRNA ligase, found in Serratia proteamaculans (strain 568).